Reading from the N-terminus, the 195-residue chain is Thymidine kinase (195 aa).

ATP contacts are provided by residues 15–22 and 91–94; these read GSMFSGKT and DEAN. The Proton acceptor role is filled by Glu-92. Positions 148, 151, 186, and 189 each coordinate Zn(2+).

The protein belongs to the thymidine kinase family. In terms of assembly, homotetramer.

It localises to the cytoplasm. It catalyses the reaction thymidine + ATP = dTMP + ADP + H(+). In Halobacterium salinarum (strain ATCC 29341 / DSM 671 / R1), this protein is Thymidine kinase.